Consider the following 580-residue polypeptide: Guanine nucleotide-binding protein alpha-4 subunit (580 aa).

The segment covering 1–10 has biased composition (polar residues); the sequence is MSPSVSSPQL. Positions 1–28 are disordered; the sequence is MSPSVSSPQLRHTKSNRAISRIDRTDPL. In terms of domain architecture, G-alpha spans 93–579; sequence RVYKMVLLGQ…RENLKLTGLV (487 aa). The interval 96 to 109 is G1 motif; sequence KMVLLGQAGAGKTT. 101–108 is a GTP binding site; it reads GQAGAGKT. 2 disordered regions span residues 160–196 and 302–325; these read KSSE…PNDA and GRAA…KDNS. Low complexity predominate over residues 167–183; sequence LESSTSASTSTSASASS. The segment at 387–395 is G2 motif; that stretch reads DILHSRVRT. GTP is bound by residues 389 to 395, 415 to 419, 484 to 487, and Ala551; these read LHSRVRT, DVGGS, and NKID. Position 395 (Thr395) interacts with Mg(2+). The segment at 411–420 is G3 motif; the sequence is YRIYDVGGSR. The segment at 480 to 487 is G4 motif; that stretch reads ILFLNKID. The tract at residues 549–554 is G5 motif; it reads TVATST.

Belongs to the G-alpha family. As to quaternary structure, g proteins are composed of 3 units; alpha, beta and gamma. The alpha chain contains the guanine nucleotide binding site.

Functionally, guanine nucleotide-binding proteins (G proteins) are involved as modulators or transducers in various transmembrane signaling systems. The sequence is that of Guanine nucleotide-binding protein alpha-4 subunit (GPA4) from Mycosarcoma maydis (Corn smut fungus).